The following is a 40-amino-acid chain: Photosystem II reaction center protein J (40 aa).

The helical transmembrane segment at 8–28 threads the bilayer; the sequence is IPLWLIGTVTGIPVIGSMGIF.

Belongs to the PsbJ family. PSII is composed of 1 copy each of membrane proteins PsbA, PsbB, PsbC, PsbD, PsbE, PsbF, PsbH, PsbI, PsbJ, PsbK, PsbL, PsbM, PsbT, PsbX, PsbY, PsbZ, Psb30/Ycf12, at least 3 peripheral proteins of the oxygen-evolving complex and a large number of cofactors. It forms dimeric complexes.

Its subcellular location is the plastid. It is found in the chloroplast thylakoid membrane. One of the components of the core complex of photosystem II (PSII). PSII is a light-driven water:plastoquinone oxidoreductase that uses light energy to abstract electrons from H(2)O, generating O(2) and a proton gradient subsequently used for ATP formation. It consists of a core antenna complex that captures photons, and an electron transfer chain that converts photonic excitation into a charge separation. The polypeptide is Photosystem II reaction center protein J (Illicium oligandrum (Star anise)).